The sequence spans 241 residues: ATP synthase subunit a (241 aa).

Transmembrane regions (helical) follow at residues 30–50, 89–109, 128–148, 193–213, and 214–234; these read GQVF…VLVG, LPFI…GALI, INTT…AGLS, LAVG…VMLL, and GLFT…FYIG.

Belongs to the ATPase A chain family. In terms of assembly, F-type ATPases have 2 components, CF(1) - the catalytic core - and CF(0) - the membrane proton channel. CF(1) has five subunits: alpha(3), beta(3), gamma(1), delta(1), epsilon(1). CF(0) has four main subunits: a, b, b' and c.

Its subcellular location is the cellular thylakoid membrane. Its function is as follows. Key component of the proton channel; it plays a direct role in the translocation of protons across the membrane. This is ATP synthase subunit a from Synechococcus sp. (strain CC9605).